Here is a 199-residue protein sequence, read N- to C-terminus: dITP/XTP pyrophosphatase (199 aa).

T9 to K14 contacts substrate. E41 and D70 together coordinate Mg(2+). Catalysis depends on D70, which acts as the Proton acceptor. Residues S71, F157–D160, K180, and H185–R186 contribute to the substrate site.

It belongs to the HAM1 NTPase family. Homodimer. It depends on Mg(2+) as a cofactor.

The enzyme catalyses XTP + H2O = XMP + diphosphate + H(+). It carries out the reaction dITP + H2O = dIMP + diphosphate + H(+). It catalyses the reaction ITP + H2O = IMP + diphosphate + H(+). In terms of biological role, pyrophosphatase that catalyzes the hydrolysis of nucleoside triphosphates to their monophosphate derivatives, with a high preference for the non-canonical purine nucleotides XTP (xanthosine triphosphate), dITP (deoxyinosine triphosphate) and ITP. Seems to function as a house-cleaning enzyme that removes non-canonical purine nucleotides from the nucleotide pool, thus preventing their incorporation into DNA/RNA and avoiding chromosomal lesions. This Mannheimia succiniciproducens (strain KCTC 0769BP / MBEL55E) protein is dITP/XTP pyrophosphatase.